Reading from the N-terminus, the 72-residue chain is Disintegrin batroxostatin (72 aa).

The 72-residue stretch at 1–72 (EAGEECDCGA…SADCPRNRFY (72 aa)) folds into the Disintegrin domain. Disulfide bonds link Cys6-Cys21, Cys8-Cys16, Cys15-Cys38, Cys29-Cys35, Cys34-Cys59, and Cys47-Cys66. Residues 51–53 (RGD) carry the Cell attachment site motif. The disordered stretch occupies residues 52–72 (GDNPDDRCTGQSADCPRNRFY).

The protein belongs to the venom metalloproteinase (M12B) family. P-II subfamily. P-IIa sub-subfamily. As to quaternary structure, monomer. Expressed by the venom gland.

The protein localises to the secreted. Functionally, inhibits fibrinogen interaction with platelets. Acts by binding to the glycoprotein IIb-IIIa receptor (ITGA2B/ITGB3) on the platelet surface and inhibits aggregation induced by ADP, thrombin, platelet-activating factor and collagen. Also inhibits T24 and SK-Mel-28 cell adhesion to fibronectin with IC(50) of 4.4 uM and 33 nM, respectively. The sequence is that of Disintegrin batroxostatin from Bothrops atrox (Barba amarilla).